A 98-amino-acid polypeptide reads, in one-letter code: Small ribosomal subunit protein uS17 (98 aa).

The protein belongs to the universal ribosomal protein uS17 family. In terms of assembly, part of the 30S ribosomal subunit.

Its function is as follows. One of the primary rRNA binding proteins, it binds specifically to the 5'-end of 16S ribosomal RNA. This is Small ribosomal subunit protein uS17 from Carboxydothermus hydrogenoformans (strain ATCC BAA-161 / DSM 6008 / Z-2901).